A 156-amino-acid polypeptide reads, in one-letter code: MNINATLIGQSVAFFIFVIFCMKFVWPPVIAALHERQKKIADGLDAASRAARDLELAQEKAGQQLREAKAQAAEIIEQAKKRGTQIVDEARETARVEADRVKAQAQAEIEQELNGVKDALRAQLGSLAVNGAEKILGATIDQNAHAELVNKLAAEI.

Residues 12-32 (VAFFIFVIFCMKFVWPPVIAA) traverse the membrane as a helical segment.

It belongs to the ATPase B chain family. As to quaternary structure, F-type ATPases have 2 components, F(1) - the catalytic core - and F(0) - the membrane proton channel. F(1) has five subunits: alpha(3), beta(3), gamma(1), delta(1), epsilon(1). F(0) has three main subunits: a(1), b(2) and c(10-14). The alpha and beta chains form an alternating ring which encloses part of the gamma chain. F(1) is attached to F(0) by a central stalk formed by the gamma and epsilon chains, while a peripheral stalk is formed by the delta and b chains.

It is found in the cell inner membrane. Its function is as follows. F(1)F(0) ATP synthase produces ATP from ADP in the presence of a proton or sodium gradient. F-type ATPases consist of two structural domains, F(1) containing the extramembraneous catalytic core and F(0) containing the membrane proton channel, linked together by a central stalk and a peripheral stalk. During catalysis, ATP synthesis in the catalytic domain of F(1) is coupled via a rotary mechanism of the central stalk subunits to proton translocation. Functionally, component of the F(0) channel, it forms part of the peripheral stalk, linking F(1) to F(0). This chain is ATP synthase subunit b, found in Pseudomonas savastanoi pv. phaseolicola (strain 1448A / Race 6) (Pseudomonas syringae pv. phaseolicola (strain 1448A / Race 6)).